A 343-amino-acid polypeptide reads, in one-letter code: Anthranilate phosphoribosyltransferase (343 aa).

Residues glycine 84, 87–88 (GD), threonine 92, 94–97 (NIST), 112–120 (KHGNRGVSS), and serine 124 each bind 5-phospho-alpha-D-ribose 1-diphosphate. Glycine 84 serves as a coordination point for anthranilate. Residue serine 96 participates in Mg(2+) binding. Asparagine 115 is an anthranilate binding site. Arginine 170 is a binding site for anthranilate. The Mg(2+) site is built by aspartate 229 and glutamate 230.

Belongs to the anthranilate phosphoribosyltransferase family. Homodimer. The cofactor is Mg(2+).

The enzyme catalyses N-(5-phospho-beta-D-ribosyl)anthranilate + diphosphate = 5-phospho-alpha-D-ribose 1-diphosphate + anthranilate. The protein operates within amino-acid biosynthesis; L-tryptophan biosynthesis; L-tryptophan from chorismate: step 2/5. Functionally, catalyzes the transfer of the phosphoribosyl group of 5-phosphorylribose-1-pyrophosphate (PRPP) to anthranilate to yield N-(5'-phosphoribosyl)-anthranilate (PRA). The sequence is that of Anthranilate phosphoribosyltransferase from Burkholderia orbicola (strain AU 1054).